A 264-amino-acid chain; its full sequence is Thymidylate synthase (264 aa).

DUMP is bound by residues Arg21 and 126 to 127; that span reads RR. Cys146 functions as the Nucleophile in the catalytic mechanism. Residues 166–169, Asn177, and 207–209 each bind dUMP; these read RSAD and HLY. Residue Asp169 coordinates (6R)-5,10-methylene-5,6,7,8-tetrahydrofolate. A (6R)-5,10-methylene-5,6,7,8-tetrahydrofolate-binding site is contributed by Ala263.

This sequence belongs to the thymidylate synthase family. Bacterial-type ThyA subfamily. In terms of assembly, homodimer.

The protein resides in the cytoplasm. It carries out the reaction dUMP + (6R)-5,10-methylene-5,6,7,8-tetrahydrofolate = 7,8-dihydrofolate + dTMP. It functions in the pathway pyrimidine metabolism; dTTP biosynthesis. In terms of biological role, catalyzes the reductive methylation of 2'-deoxyuridine-5'-monophosphate (dUMP) to 2'-deoxythymidine-5'-monophosphate (dTMP) while utilizing 5,10-methylenetetrahydrofolate (mTHF) as the methyl donor and reductant in the reaction, yielding dihydrofolate (DHF) as a by-product. This enzymatic reaction provides an intracellular de novo source of dTMP, an essential precursor for DNA biosynthesis. The protein is Thymidylate synthase of Rhodopseudomonas palustris (strain ATCC BAA-98 / CGA009).